Here is a 353-residue protein sequence, read N- to C-terminus: Palmitoyltransferase SWF1 (353 aa).

A topological domain (lumenal) is located at residue Met1. Residues 2–22 (LFTLIVCLTIISSLATFLLLF) traverse the membrane as a helical segment. The Cytoplasmic portion of the chain corresponds to 23–61 (GDSPSFRNTPIQKLRNSLLSISRDIFQFYHWLDEKLNGQ). The helical transmembrane segment at 62 to 82 (LLKILNWLVPVGYVMVVTVCF) threads the bilayer. At 83–100 (QQFLTHTLPMLSSPGLFR) the chain is on the lumenal side. The helical transmembrane segment at 101–121 (LFTIYFSMVLIYASTILAAFS) threads the bilayer. Residues 122 to 190 (DPGRITTINL…NNCVGYYNYK (69 aa)) are Cytoplasmic-facing. A DHHC domain is found at 147-197 (KTCSTCHIAKPARSKHCSVCNQCFLLYDHHCVWINNCVGYYNYKWFMLFLI). Catalysis depends on Cys177, which acts as the S-palmitoyl cysteine intermediate. Residues 191-211 (WFMLFLISNINMLGYGGWLCY) form a helical membrane-spanning segment. Over 212 to 233 (WALTPVSWRKITSTNNANKVTG) the chain is Lumenal. A helical membrane pass occupies residues 234–254 (IFLILCSIFIVITTLFTFLHL). At 255–353 (RYIYLGVTTN…WNNLIERLKW (99 aa)) the chain is on the cytoplasmic side.

The protein belongs to the DHHC palmitoyltransferase family. SWF1 subfamily.

It is found in the endoplasmic reticulum membrane. The catalysed reaction is L-cysteinyl-[protein] + hexadecanoyl-CoA = S-hexadecanoyl-L-cysteinyl-[protein] + CoA. Functionally, palmitoyltransferase that targets several endosomal SNAREs. Palmitoylates the SNAREs at cysteine residues close to the cytoplasmic end of their transmembrane domain. May have a role in the cellular quality control of transmembrane domain-containing proteins. The protein is Palmitoyltransferase SWF1 (SWF1) of Candida albicans (strain SC5314 / ATCC MYA-2876) (Yeast).